The sequence spans 876 residues: Importin subunit beta-1 (876 aa).

Methionine 1 bears the N-acetylmethionine mark. 5 HEAT repeats span residues 3 to 29, 32 to 62, 85 to 120, 129 to 160, and 170 to 201; these read LITI…ERAA, NLPT…LQIK, ANAR…ACAE, LIPQ…ICQD, and SNEI…LLNS. At serine 12 the chain carries Phosphoserine. The region spanning 21–101 is the Importin N-terminal domain; sequence AQKFLERAAV…KNYVLQTLGT (81 aa). Lysine 211 bears the N6-acetyllysine mark. HEAT repeat units follow at residues 212–247, 260–302, 314–359, 363–392, 399–438, 449–485, 500–537, 544–592, 597–639, 644–680, 686–724, 729–777, 785–828, and 834–875; these read ESER…IMSL, LFAI…EAAE, YAKG…STCC, IVPH…AFGS, PNQL…ICEL, LAPL…YEAA, SSSF…EIVK, YPAV…QNVL, HQDA…VEVL, LKYM…LCRA, LPFC…ALAI, KKYL…QGLK, PDVM…LCTA, and LKLV…LKNQ. An essential for high affinity interaction with RPL23A region spans residues 286-462; that stretch reads VCDEEMDLAI…LQCLIEGLSA (177 aa). An IAB-binding region spans residues 329–342; sequence TLTKQDENDDDDDW. The segment at 334-419 is ran-GTP binding; sequence DENDDDDDWN…MPTLIELMKD (86 aa). 2 positions are modified to N6-acetyllysine: lysine 835 and lysine 867.

It belongs to the importin beta family. Importin beta-1 subfamily. In terms of assembly, forms a complex with an importin alpha subunit. Interacts with XPO1. Forms a heterodimer with IPO7. The KPNB1/IPO7 heterodimer interacts with H1 histone. Interacts with SNUPN. Interacts with H2A, H2B, H3 and H4 histones. Component of an import snRNP complex composed of KPNB1, SNUPN, SMN1 and ZNF259. Component of a nuclear export receptor complex composed of KPNB1, Ran, SNUPN and XPO1. Interacts with SRY. Interacts with PRKCI/atypical protein kinase C iota. Interacts with KPNA2. Interacts with KPNA7. Interacts with SNAI1 (via zinc fingers) and SNAI2 (via zinc fingers). Interacts with SLC35G1 and STIM1. Interacts with DCAF8. Interacts with RAN. Interacts with NUMA1 (via C-terminus); this interaction is inhibited by RanGTP. Interacts with ZBED1/hDREF; required for nuclear import of ZBED1/hDREF. Interacts with SRP19. Interacts with RPL23A (via BIB domain), RPS7 and RPL5. In terms of processing, mono-ADP-ribosylated by PARP16.

It localises to the cytoplasm. The protein localises to the nucleus envelope. Functions in nuclear protein import, either in association with an adapter protein, like an importin-alpha subunit, which binds to nuclear localization signals (NLS) in cargo substrates, or by acting as autonomous nuclear transport receptor. Acting autonomously, serves itself as NLS receptor. Docking of the importin/substrate complex to the nuclear pore complex (NPC) is mediated by KPNB1 through binding to nucleoporin FxFG repeats and the complex is subsequently translocated through the pore by an energy requiring, Ran-dependent mechanism. At the nucleoplasmic side of the NPC, Ran binds to importin-beta and the three components separate and importin-alpha and -beta are re-exported from the nucleus to the cytoplasm where GTP hydrolysis releases Ran from importin. The directionality of nuclear import is thought to be conferred by an asymmetric distribution of the GTP- and GDP-bound forms of Ran between the cytoplasm and nucleus. Mediates autonomously the nuclear import of ribosomal proteins RPL23A, RPS7 and RPL5. In association with IPO7, mediates the nuclear import of H1 histone. In vitro, mediates nuclear import of H2A, H2B, H3 and H4 histones. Imports MRTFA, SNAI1 and PRKCI into the nucleus. In Mus musculus (Mouse), this protein is Importin subunit beta-1 (Kpnb1).